We begin with the raw amino-acid sequence, 254 residues long: Cytokine-inducible SH2-containing protein (254 aa).

Residues 82 to 188 (WYWGSITASE…ATTPALPTPK (107 aa)) form the SH2 domain. The segment at 171 to 195 (TRSDSPDLATTPALPTPKEDAPGDP) is disordered. An SOCS box domain is found at 205–253 (KLVQPFVRRSSTRSLQHLCRLVINRLVVDVDCLPLPRRMADYLRQYPFQ).

In terms of assembly, stably associated with the tyrosine-phosphorylated IL3 receptor beta chain and tyrosine-phosphorylated EPO receptor (EPOR).

The protein operates within protein modification; protein ubiquitination. SOCS family proteins form part of a classical negative feedback system that regulates cytokine signal transduction. CIS is involved in the negative regulation of cytokines that signal through the JAK-STAT5 pathway such as erythropoietin, prolactin and interleukin 3 (IL3) receptor. Inhibits STAT5 trans-activation by suppressing its tyrosine phosphorylation. May be a substrate recognition component of a SCF-like ECS (Elongin BC-CUL2/5-SOCS-box protein) E3 ubiquitin-protein ligase complex which mediates the ubiquitination and subsequent proteasomal degradation of target proteins. The polypeptide is Cytokine-inducible SH2-containing protein (CISH) (Bos taurus (Bovine)).